Consider the following 408-residue polypeptide: Protein EcsB (408 aa).

9 helical membrane passes run 30-50, 53-73, 111-131, 134-154, 180-200, 284-304, 308-328, 351-371, and 374-394; these read HLVI…SKWI, IPAH…VLTS, LFPL…VTPG, LVSY…NQVM, LVLY…YVIM, YLGI…YVSA, IAAV…LPLF, YFSL…VASA, and AGLT…FVVL.

The protein localises to the cell membrane. Functionally, presumed to form part of an ABC-transporter, it may form a transport channel. This is Protein EcsB (ecsB) from Bacillus subtilis (strain 168).